A 323-amino-acid polypeptide reads, in one-letter code: Muscleblind-like protein 3 (323 aa).

C3H1-type zinc fingers lie at residues 13–41 (WLTL…HPSR), 47–73 (NGRV…HPPP), 177–205 (TDKL…HPLE), and 213–239 (ENSV…HPPA).

It belongs to the muscleblind family. As to expression, expressed in fast and slow myotomal muscle, heart, liver, skin, brain and testis.

It localises to the nucleus. The protein localises to the cytoplasm. In terms of biological role, involved in pre-mRNA alternative splicing regulation. Could inhibit terminal muscle differentiation, acting at approximately the time of myogenin induction. The sequence is that of Muscleblind-like protein 3 (mbnl3) from Takifugu rubripes (Japanese pufferfish).